Reading from the N-terminus, the 668-residue chain is DNA ligase (668 aa).

Residues 32–36, 81–82, and Glu-111 each bind NAD(+); these read DVEYD and SL. The active-site N6-AMP-lysine intermediate is the Lys-113. Arg-134, Glu-171, Lys-290, and Lys-314 together coordinate NAD(+). Residues Cys-408, Cys-411, Cys-426, and Cys-432 each coordinate Zn(2+). Positions 591–668 constitute a BRCT domain; the sequence is EEDLSLKGQT…DEEALIAILS (78 aa).

Belongs to the NAD-dependent DNA ligase family. LigA subfamily. It depends on Mg(2+) as a cofactor. Mn(2+) is required as a cofactor.

It catalyses the reaction NAD(+) + (deoxyribonucleotide)n-3'-hydroxyl + 5'-phospho-(deoxyribonucleotide)m = (deoxyribonucleotide)n+m + AMP + beta-nicotinamide D-nucleotide.. In terms of biological role, DNA ligase that catalyzes the formation of phosphodiester linkages between 5'-phosphoryl and 3'-hydroxyl groups in double-stranded DNA using NAD as a coenzyme and as the energy source for the reaction. It is essential for DNA replication and repair of damaged DNA. This chain is DNA ligase, found in Shewanella piezotolerans (strain WP3 / JCM 13877).